The sequence spans 531 residues: Transcription termination/antitermination protein NusA (531 aa).

The 71-residue stretch at 165–235 (GEVIEAKVED…SLWPITLSRS (71 aa)) folds into the S1 motif domain. In terms of domain architecture, KH spans 340–410 (DTSIEVVVPA…FGIKKRREKI (71 aa)). Positions 463–475 (EKQVTPKEKEKVQ) are enriched in basic and acidic residues. The segment at 463-531 (EKQVTPKEKE…KQTFDSFDDL (69 aa)) is disordered. The segment covering 476–490 (PKAKVHSNSHSKKPA) has biased composition (basic residues). Over residues 502-512 (ASDKNLKKDQV) the composition is skewed to basic and acidic residues. Over residues 513–531 (DNNQTNPQTKQTFDSFDDL) the composition is skewed to polar residues.

Belongs to the NusA family. Monomer. Binds directly to the core enzyme of the DNA-dependent RNA polymerase and to nascent RNA.

Its subcellular location is the cytoplasm. In terms of biological role, participates in both transcription termination and antitermination. This is Transcription termination/antitermination protein NusA from Mycoplasma genitalium (strain ATCC 33530 / DSM 19775 / NCTC 10195 / G37) (Mycoplasmoides genitalium).